The following is a 431-amino-acid chain: Serine--tRNA ligase (431 aa).

L-serine is bound at residue 235 to 237 (TSE). Residue 266 to 268 (RSE) participates in ATP binding. An L-serine-binding site is contributed by glutamate 289. 353–356 (EISS) is a binding site for ATP. Serine 388 contacts L-serine.

Belongs to the class-II aminoacyl-tRNA synthetase family. Type-1 seryl-tRNA synthetase subfamily. In terms of assembly, homodimer. The tRNA molecule binds across the dimer.

It is found in the cytoplasm. The catalysed reaction is tRNA(Ser) + L-serine + ATP = L-seryl-tRNA(Ser) + AMP + diphosphate + H(+). It carries out the reaction tRNA(Sec) + L-serine + ATP = L-seryl-tRNA(Sec) + AMP + diphosphate + H(+). It participates in aminoacyl-tRNA biosynthesis; selenocysteinyl-tRNA(Sec) biosynthesis; L-seryl-tRNA(Sec) from L-serine and tRNA(Sec): step 1/1. Catalyzes the attachment of serine to tRNA(Ser). Is also able to aminoacylate tRNA(Sec) with serine, to form the misacylated tRNA L-seryl-tRNA(Sec), which will be further converted into selenocysteinyl-tRNA(Sec). This Paraburkholderia phytofirmans (strain DSM 17436 / LMG 22146 / PsJN) (Burkholderia phytofirmans) protein is Serine--tRNA ligase.